The sequence spans 512 residues: GTPase Obg (512 aa).

In terms of domain architecture, Obg spans 2-159 (ATFVDTVTLH…GDVVLELKVV (158 aa)). One can recognise an OBG-type G domain in the interval 160 to 336 (ADVALVGYPS…LSFALAELVE (177 aa)). GTP contacts are provided by residues 166 to 173 (GYPSAGKS), 191 to 195 (FTTLH), 212 to 215 (DVPG), 288 to 291 (NKID), and 317 to 319 (STV). Mg(2+) is bound by residues serine 173 and threonine 193. An OCT domain is found at 355 to 439 (PRAVNEKPFT…GDGIVFDWEP (85 aa)). Positions 491-512 (GEAGLWADEDGTDEDASSDAKA) are disordered. The span at 497–512 (ADEDGTDEDASSDAKA) shows a compositional bias: acidic residues.

This sequence belongs to the TRAFAC class OBG-HflX-like GTPase superfamily. OBG GTPase family. As to quaternary structure, monomer. Mg(2+) serves as cofactor.

The protein localises to the cytoplasm. In terms of biological role, an essential GTPase which binds GTP, GDP and possibly (p)ppGpp with moderate affinity, with high nucleotide exchange rates and a fairly low GTP hydrolysis rate. Plays a role in control of the cell cycle, stress response, ribosome biogenesis and in those bacteria that undergo differentiation, in morphogenesis control. The polypeptide is GTPase Obg (Clavibacter michiganensis subsp. michiganensis (strain NCPPB 382)).